The primary structure comprises 116 residues: NADPH-dependent 7-cyano-7-deazaguanine reductase (116 aa).

Catalysis depends on cysteine 31, which acts as the Thioimide intermediate. Residue aspartate 38 is the Proton donor of the active site. Substrate is bound by residues 53–55 and 72–73; these read IEL and YE.

The protein belongs to the GTP cyclohydrolase I family. QueF type 1 subfamily.

It is found in the cytoplasm. It catalyses the reaction 7-aminomethyl-7-carbaguanine + 2 NADP(+) = 7-cyano-7-deazaguanine + 2 NADPH + 3 H(+). The protein operates within tRNA modification; tRNA-queuosine biosynthesis. Catalyzes the NADPH-dependent reduction of 7-cyano-7-deazaguanine (preQ0) to 7-aminomethyl-7-deazaguanine (preQ1). The sequence is that of NADPH-dependent 7-cyano-7-deazaguanine reductase from Pelodictyon phaeoclathratiforme (strain DSM 5477 / BU-1).